Reading from the N-terminus, the 294-residue chain is Acetyl-coenzyme A carboxylase carboxyl transferase subunit beta (294 aa).

A CoA carboxyltransferase N-terminal domain is found at isoleucine 30 to glutamate 294. Residues cysteine 34, cysteine 37, cysteine 53, and cysteine 56 each contribute to the Zn(2+) site. A C4-type zinc finger spans residues cysteine 34–cysteine 56.

This sequence belongs to the AccD/PCCB family. As to quaternary structure, acetyl-CoA carboxylase is a heterohexamer composed of biotin carboxyl carrier protein (AccB), biotin carboxylase (AccC) and two subunits each of ACCase subunit alpha (AccA) and ACCase subunit beta (AccD). Zn(2+) is required as a cofactor.

The protein resides in the cytoplasm. It catalyses the reaction N(6)-carboxybiotinyl-L-lysyl-[protein] + acetyl-CoA = N(6)-biotinyl-L-lysyl-[protein] + malonyl-CoA. Its pathway is lipid metabolism; malonyl-CoA biosynthesis; malonyl-CoA from acetyl-CoA: step 1/1. Functionally, component of the acetyl coenzyme A carboxylase (ACC) complex. Biotin carboxylase (BC) catalyzes the carboxylation of biotin on its carrier protein (BCCP) and then the CO(2) group is transferred by the transcarboxylase to acetyl-CoA to form malonyl-CoA. The chain is Acetyl-coenzyme A carboxylase carboxyl transferase subunit beta from Listeria monocytogenes serovar 1/2a (strain ATCC BAA-679 / EGD-e).